Consider the following 766-residue polypeptide: LPS-assembly protein LptD (766 aa).

The N-terminal stretch at 1 to 18 is a signal peptide; it reads MQIRYFLALSLLPNIVLA.

The protein belongs to the LptD family. As to quaternary structure, component of the lipopolysaccharide transport and assembly complex. Interacts with LptE and LptA.

Its subcellular location is the cell outer membrane. Its function is as follows. Together with LptE, is involved in the assembly of lipopolysaccharide (LPS) at the surface of the outer membrane. This chain is LPS-assembly protein LptD, found in Shewanella frigidimarina (strain NCIMB 400).